Here is a 967-residue protein sequence, read N- to C-terminus: Kinesin heavy chain (967 aa).

The 319-residue stretch at 8–326 folds into the Kinesin motor domain; the sequence is NIKVICRVRP…LLFGQRAKTI (319 aa). Residue 85–92 coordinates ATP; that stretch reads GQTSSGKT. The microtubule-binding stretch occupies residues 173 to 314; sequence VSSPEEVMEV…PASYNESETK (142 aa). Disordered regions lie at residues 387–411 and 923–967; these read VPAE…NEGD and KPIR…ESKA. Residues 392–861 are a coiled coil; that stretch reads PATSTTSLAG…RDNADLRCEL (470 aa). The interval 862 to 967 is globular; that stretch reads PKLEKRLRAT…PIRMAPESKA (106 aa). Residues 949–958 are compositionally biased toward polar residues; that stretch reads QNGPMITSTP.

Belongs to the TRAFAC class myosin-kinesin ATPase superfamily. Kinesin family. Kinesin subfamily. In terms of assembly, oligomer composed of two heavy chains and two light chains. Interacts with amyloid-beta precursor-like protein (via cytoplasmic domain).

Its subcellular location is the cytoplasm. The protein localises to the cytoskeleton. It is found in the cell projection. The protein resides in the axon. Its function is as follows. Kinesin is a microtubule-associated force-producing protein that may play a role in organelle transport. The chain is Kinesin heavy chain from Doryteuthis pealeii (Longfin inshore squid).